The sequence spans 290 residues: 30 kDa spicule matrix protein alpha (290 aa).

Positions 1 to 20 (MRGFVYVLVCVLALASFSRA) are cleaved as a signal peptide. In terms of domain architecture, C-type lectin spans 92-162 (ANMYCGQMHP…YTNWERMTAP (71 aa)). An N-linked (GlcNAc...) asparagine glycan is attached at Asn-102.

In terms of tissue distribution, accumulates exclusively in mineralized tissues.

Functionally, matrix protein of the sea urchin embryo spicule. The function of the matrix proteins is to direct crystal growth in certain orientations and inhibit growth in others. The chain is 30 kDa spicule matrix protein alpha (SM30A) from Strongylocentrotus purpuratus (Purple sea urchin).